A 44-amino-acid polypeptide reads, in one-letter code: Large ribosomal subunit protein bL34 (44 aa).

This sequence belongs to the bacterial ribosomal protein bL34 family.

The protein is Large ribosomal subunit protein bL34 of Buchnera aphidicola subsp. Cinara cedri (strain Cc).